Consider the following 326-residue polypeptide: PDZ domain-containing protein MAGIX (326 aa).

Residues 1–32 (MDSHAGNTADPRGSRRGVGLQGSGSPRARQLL) are disordered. The PDZ domain maps to 128-212 (SVELVRGPAG…RLCLVLQRPQ (85 aa)). The disordered stretch occupies residues 214-267 (MNGSRSKEVGGGHQKTDRIPDPRGGRMMESRGTISPVHHRPKTRTGPGPSPESV). Residues 218–242 (RSKEVGGGHQKTDRIPDPRGGRMME) are compositionally biased toward basic and acidic residues. Serine 263 bears the Phosphoserine mark.

The protein is PDZ domain-containing protein MAGIX (Magix) of Rattus norvegicus (Rat).